We begin with the raw amino-acid sequence, 181 residues long: Shikimate kinase (181 aa).

An ATP-binding site is contributed by 17-22 (GAGKTT). Thr21 is a binding site for Mg(2+). 3 residues coordinate substrate: Asp39, Arg63, and Gly85. Arg122 is a binding site for ATP. Arg141 lines the substrate pocket.

It belongs to the shikimate kinase family. In terms of assembly, monomer. The cofactor is Mg(2+).

Its subcellular location is the cytoplasm. The catalysed reaction is shikimate + ATP = 3-phosphoshikimate + ADP + H(+). Its pathway is metabolic intermediate biosynthesis; chorismate biosynthesis; chorismate from D-erythrose 4-phosphate and phosphoenolpyruvate: step 5/7. Functionally, catalyzes the specific phosphorylation of the 3-hydroxyl group of shikimic acid using ATP as a cosubstrate. The protein is Shikimate kinase of Nostoc sp. (strain PCC 7120 / SAG 25.82 / UTEX 2576).